Consider the following 241-residue polypeptide: Polyol phosphate phosphatase PYP1 (241 aa).

The active-site Nucleophile is the Asp9. Asp9, Asp11, and Asp179 together coordinate Mg(2+). Asp11 functions as the Proton donor in the catalytic mechanism.

The protein belongs to the HAD-like hydrolase superfamily. It depends on Mg(2+) as a cofactor.

It is found in the cytoplasm. The protein resides in the nucleus. The catalysed reaction is D-ribitol 5-phosphate + H2O = ribitol + phosphate. It carries out the reaction D-sorbitol 6-phosphate + H2O = D-sorbitol + phosphate. It catalyses the reaction sn-glycerol 1-phosphate + H2O = glycerol + phosphate. The enzyme catalyses D-erythrose 4-phosphate + H2O = D-erythrose + phosphate. Functionally, hydrolyzes sugar alcohol (polyol) phosphates. Dephosphorylates a variety of substrates, including: sn-glycerol 1-phosphate (D-glycerol 3-phosphate), D-ribitol 5-phosphate, D-sorbitol 6-phosphate (D-glucitol 6-phosphate), and D-erythrose 4-phosphate. Prevents accumulation of toxic levels of polyol phosphates, which can impair glycolysis by inhibiting glucose-6-phosphate isomerase. This Saccharomyces cerevisiae (strain ATCC 204508 / S288c) (Baker's yeast) protein is Polyol phosphate phosphatase PYP1.